Here is a 263-residue protein sequence, read N- to C-terminus: Undecaprenyl-diphosphatase 3 (263 aa).

The next 8 helical transmembrane spans lie at 15–37 (GLTE…LIGF), 42–62 (AKVF…VIFW), 83–103 (LHII…HSAI), 106–126 (VLFG…LMIV), 142–162 (ITYK…WPGF), 183–203 (AEYT…LDLI), 216–236 (LFAT…VSFL), and 242–262 (VKLT…YFFI).

This sequence belongs to the UppP family.

The protein resides in the cell membrane. The enzyme catalyses di-trans,octa-cis-undecaprenyl diphosphate + H2O = di-trans,octa-cis-undecaprenyl phosphate + phosphate + H(+). Its function is as follows. Catalyzes the dephosphorylation of undecaprenyl diphosphate (UPP). Confers resistance to bacitracin. This Bacillus thuringiensis subsp. konkukian (strain 97-27) protein is Undecaprenyl-diphosphatase 3.